Here is a 110-residue protein sequence, read N- to C-terminus: Bowman-Birk type proteinase inhibitor (110 aa).

Positions 1–28 (MVLMNKKAIMKLALMLFLLGFTANVVDA) are cleaved as a signal peptide. A propeptide spanning residues 29-42 (RFDSTSFITQVLSN) is cleaved from the precursor. 7 disulfides stabilise this stretch: Cys-50/Cys-103, Cys-51/Cys-66, Cys-54/Cys-99, Cys-56/Cys-64, Cys-73/Cys-80, Cys-77/Cys-92, and Cys-82/Cys-90.

Monomer.

Its function is as follows. Inhibitor of trypsin and of chymotrypsin. The polypeptide is Bowman-Birk type proteinase inhibitor (Lens culinaris (Lentil)).